Here is a 309-residue protein sequence, read N- to C-terminus: MVVQAVSESLKFDQSRFLNDIQILSAAINAPYSESTTKKVLSVFSDSFHDGVVLWRATDRVGDALNYRFYSRRPIDTVTIASSAGLLSPDVVSNLGRLVTSWSSLYDGLPEESCDFDAEKGLVKAWVYMRGMRPLGDILSAEGVPESLKQHEERFKALELEKVRHVAVDYQKATVNLYFRAQGPISLQQATSFNALAGAGPPSQTQFLEMQEFLNAVGYTFAVTIRVDSGDIERVGYYALKLPDRATKNWPVINAQLEKFAQFAPSYDREEMNAVAWSFGGTKRYVKFERSYCGELVPLIKGWGTTLSS.

Belongs to the aromatic prenyltransferase family.

Its function is as follows. Prenyltransferase that attaches isoprenoid moieties to carbon atoms of aromatic substrates in an enzyme-catalyzed Friedel-Crafts reaction. Shows specificity for dimethylallyl diphosphate (DMAPP) and does not accept geranyl diphosphate (GPP) or isopentenyl diphosphate (IPP). Prenylates the artificial substrate 2,7-dihydroxynaphthalene (2,7-DHN), as well as dihydrophenazine-1-carboxylic acid and 4-hydroxybenzoic acid at lower levels. Only traces of products are detected with aspulvinone E or flaviolin as substrates; and no product is formed with L-tryptophan, L-tyrosine, or 4-hydroxyphenylpyruvate. Ptf seems no to be involved in the prenylation reaction in the biosynthesis of aspulvinone H and J and the physiological function of ptf remains unknown. The sequence is that of Aromatic prenyltransferase from Botryotinia fuckeliana (strain B05.10) (Noble rot fungus).